The primary structure comprises 442 residues: MKLQGVRALVVGMRKSGVASAEFLARRGAVVSATDLKPLDELPGVGELGIPFAVQTPAVFEGYDLIVPSPDVPYDLPPLEEARRHGVRVIGEVELAAPFLKGRTIGITGSNGKTTTTSLTGHILREAGVPVQVGGNIGLPVTAMVESSRDDGWNVLELSSFQLETIHEFRAHIGLALNVTQNHLDRHHTFENYAAIKGRLFETQQAGDYAVLNAEDPVCVAYAARTRATVQWFSSRKKVDPGATLCGNKLVLFGKLLMEAGEIPIRGRHNIENVLAAAIAASRAGVEHAAIAAAVRSFRAVEHRLEFVRKLNGVDFYNDSKATSVDATLKALDAFPGGLWVILGGKDKGLDYAALREPLTEKARAALLIGAAAGKIAEQIAGAVPLVDAKTLDGAVRHAFAHAAPGDTVLLAPACASFDQFKSYEHRGETFKQIVNGLEPKD.

109-115 (GSNGKTT) contacts ATP.

It belongs to the MurCDEF family.

It is found in the cytoplasm. It carries out the reaction UDP-N-acetyl-alpha-D-muramoyl-L-alanine + D-glutamate + ATP = UDP-N-acetyl-alpha-D-muramoyl-L-alanyl-D-glutamate + ADP + phosphate + H(+). The protein operates within cell wall biogenesis; peptidoglycan biosynthesis. In terms of biological role, cell wall formation. Catalyzes the addition of glutamate to the nucleotide precursor UDP-N-acetylmuramoyl-L-alanine (UMA). This chain is UDP-N-acetylmuramoylalanine--D-glutamate ligase, found in Solibacter usitatus (strain Ellin6076).